The following is a 240-amino-acid chain: Dihydromonapterin reductase (240 aa).

The active-site Proton acceptor is the tyrosine 152.

Belongs to the short-chain dehydrogenases/reductases (SDR) family. FolM subfamily.

The catalysed reaction is (6S)-5,6,7,8-tetrahydrofolate + NADP(+) = 7,8-dihydrofolate + NADPH + H(+). It carries out the reaction 7,8-dihydromonapterin + NADPH + H(+) = 5,6,7,8-tetrahydromonapterin + NADP(+). Its function is as follows. Catalyzes the reduction of dihydromonapterin to tetrahydromonapterin. Also has lower activity with dihydrofolate. This Escherichia coli O139:H28 (strain E24377A / ETEC) protein is Dihydromonapterin reductase (folM).